Consider the following 505-residue polypeptide: Exoglucanase 1 (505 aa).

A signal peptide spans 1–17; the sequence is MYRKLAVISAFLAAARA. Glutamine 18 carries the pyrrolidone carboxylic acid modification. The segment at 18 to 449 is catalytic; that stretch reads QQVCTQQAET…GSTGGNTGSN (432 aa). Disulfide bonds link cysteine 21–cysteine 88, cysteine 36–cysteine 41, cysteine 66–cysteine 87, and cysteine 77–cysteine 83. Asparagine 93 and asparagine 126 each carry an N-linked (GlcNAc...) asparagine glycan. 6 disulfide bridges follow: cysteine 151/cysteine 410, cysteine 185/cysteine 223, cysteine 189/cysteine 222, cysteine 243/cysteine 269, cysteine 251/cysteine 256, and cysteine 274/cysteine 344. The Nucleophile role is filled by glutamate 225. Catalysis depends on glutamate 230, which acts as the Proton donor/acceptor. N-linked (GlcNAc...) asparagine glycans are attached at residues asparagine 283 and asparagine 397. 2 disordered regions span residues 399–423 and 440–472; these read TAST…VEAQ and GSTG…ATQT. The span at 409–423 shows a compositional bias: polar residues; that stretch reads SCSTSSGVPAQVEAQ. A compositionally biased stretch (low complexity) spans 447–470; sequence GSNPPGTSTTRAPPSSTGSSPTAT. Positions 450–468 are linker; sequence PPGTSTTRAPPSSTGSSPT. Positions 469–505 constitute a CBM1 domain; it reads ATQTHYGQCGGTGWTGPTRCASGYTCQVLNPFYSQCL.

It belongs to the glycosyl hydrolase 7 (cellulase C) family. In terms of processing, O-glycosylated. O-glycosylation of the cellulase linker provides protection from proteolysis. Linker glycans also contribute to binding affinity of cellobiohydrolases to cellulose.

It localises to the secreted. The catalysed reaction is Hydrolysis of (1-&gt;4)-beta-D-glucosidic linkages in cellulose and cellotetraose, releasing cellobiose from the non-reducing ends of the chains.. Exocellobiohydrolases (CBH) that catalyzes the hydrolysis of 1,4-beta-D-glucosidic bonds in cellulose to release the disaccharide cellobiose. The degradation of cellulose involves an interplay between different cellulolytic enzymes. Hydrolysis starts with endoglucanases (EGs), which cut internal beta-1,4-glucosidic bonds in cellulose to reduce the polymerization degree of the substrate and create new chain ends for exocellobiohydrolases (CBHs). The CBHs release the disaccharide cellobiose from the non-reducing end of the cellulose polymer chain. Finally, beta-1,4-glucosidases hydrolyze the cellobiose and other short cello-oligosaccharides into glucose units. This chain is Exoglucanase 1 (cbh1), found in Trichoderma harzianum (Hypocrea lixii).